Reading from the N-terminus, the 447-residue chain is Glutamate-1-semialdehyde 2,1-aminomutase (447 aa).

Lys-277 carries the N6-(pyridoxal phosphate)lysine modification.

Belongs to the class-III pyridoxal-phosphate-dependent aminotransferase family. HemL subfamily. As to quaternary structure, homodimer. The cofactor is pyridoxal 5'-phosphate.

Its subcellular location is the cytoplasm. The enzyme catalyses (S)-4-amino-5-oxopentanoate = 5-aminolevulinate. The protein operates within porphyrin-containing compound metabolism; protoporphyrin-IX biosynthesis; 5-aminolevulinate from L-glutamyl-tRNA(Glu): step 2/2. In Arthrobacter sp. (strain FB24), this protein is Glutamate-1-semialdehyde 2,1-aminomutase.